The following is a 333-amino-acid chain: MSADESNIICIEDDEENIEESGVKYSDKLPVCQGSSKILCRSSSQEVIQENERKKRGKNYAVPSILDDFFGVYCLLSRSPNRYFKNRCYIGYTVNPNRRIRQHNAGKEFGGAKKTDHRGPWDMVCIIHGFPNSVSALRFEWAWQNPEKSRRLRLLNLKKRTSETAFGFRLRIACHMLNSDPWRRLSLTFRWLLPELEIPFPLDVLPPSHIAVEHGAVTKISTLIPQLQEEYDVAGTCSLCLKPILSISELLRCHANETCKSHFHMRCLSKHALNAVDEYRTSLFPIQGQCPKCGVVYLWGDLIRDQRILLAVNKFNSSSTLFNMIPRGKLIKM.

The region spanning Asp68 to Leu157 is the GIY-YIG domain. The segment at Cys237–Cys293 adopts an SLX1-type zinc-finger fold.

The protein belongs to the SLX1 family. As to quaternary structure, forms a heterodimer with a member of the SLX4 family. A divalent metal cation serves as cofactor.

Its subcellular location is the nucleus. In terms of biological role, catalytic subunit of a heterodimeric structure-specific endonuclease that resolves DNA secondary structures generated during DNA repair and recombination. Has endonuclease activity towards branched DNA substrates, introducing single-strand cuts in duplex DNA close to junctions with ss-DNA. In Brugia malayi (Filarial nematode worm), this protein is Structure-specific endonuclease subunit SLX1 homolog.